A 481-amino-acid chain; its full sequence is Protein nucleotidyltransferase YdiU (481 aa).

ATP is bound by residues glycine 85, glycine 87, arginine 88, lysine 108, aspartate 120, glycine 121, arginine 172, and arginine 179. Catalysis depends on aspartate 248, which acts as the Proton acceptor. Residues asparagine 249 and aspartate 258 each contribute to the Mg(2+) site. Residue aspartate 258 coordinates ATP.

Belongs to the SELO family. Mg(2+) serves as cofactor. Mn(2+) is required as a cofactor.

The catalysed reaction is L-seryl-[protein] + ATP = 3-O-(5'-adenylyl)-L-seryl-[protein] + diphosphate. It catalyses the reaction L-threonyl-[protein] + ATP = 3-O-(5'-adenylyl)-L-threonyl-[protein] + diphosphate. It carries out the reaction L-tyrosyl-[protein] + ATP = O-(5'-adenylyl)-L-tyrosyl-[protein] + diphosphate. The enzyme catalyses L-histidyl-[protein] + UTP = N(tele)-(5'-uridylyl)-L-histidyl-[protein] + diphosphate. The catalysed reaction is L-seryl-[protein] + UTP = O-(5'-uridylyl)-L-seryl-[protein] + diphosphate. It catalyses the reaction L-tyrosyl-[protein] + UTP = O-(5'-uridylyl)-L-tyrosyl-[protein] + diphosphate. In terms of biological role, nucleotidyltransferase involved in the post-translational modification of proteins. It can catalyze the addition of adenosine monophosphate (AMP) or uridine monophosphate (UMP) to a protein, resulting in modifications known as AMPylation and UMPylation. The protein is Protein nucleotidyltransferase YdiU of Cereibacter sphaeroides (strain ATCC 17029 / ATH 2.4.9) (Rhodobacter sphaeroides).